A 422-amino-acid polypeptide reads, in one-letter code: UDP-N-acetylglucosamine 1-carboxyvinyltransferase (422 aa).

Position 22–23 (22–23 (KN)) interacts with phosphoenolpyruvate. Arginine 95 contributes to the UDP-N-acetyl-alpha-D-glucosamine binding site. Cysteine 119 serves as the catalytic Proton donor. Cysteine 119 carries the post-translational modification 2-(S-cysteinyl)pyruvic acid O-phosphothioketal. Residues 124–128 (RPIDQ), aspartate 309, and valine 331 contribute to the UDP-N-acetyl-alpha-D-glucosamine site.

It belongs to the EPSP synthase family. MurA subfamily.

It is found in the cytoplasm. The enzyme catalyses phosphoenolpyruvate + UDP-N-acetyl-alpha-D-glucosamine = UDP-N-acetyl-3-O-(1-carboxyvinyl)-alpha-D-glucosamine + phosphate. It participates in cell wall biogenesis; peptidoglycan biosynthesis. Its function is as follows. Cell wall formation. Adds enolpyruvyl to UDP-N-acetylglucosamine. This Anaeromyxobacter sp. (strain Fw109-5) protein is UDP-N-acetylglucosamine 1-carboxyvinyltransferase.